We begin with the raw amino-acid sequence, 381 residues long: Anhydro-N-acetylmuramic acid kinase (381 aa).

22–29 (GTSIDGID) provides a ligand contact to ATP.

This sequence belongs to the anhydro-N-acetylmuramic acid kinase family.

The enzyme catalyses 1,6-anhydro-N-acetyl-beta-muramate + ATP + H2O = N-acetyl-D-muramate 6-phosphate + ADP + H(+). The protein operates within amino-sugar metabolism; 1,6-anhydro-N-acetylmuramate degradation. It participates in cell wall biogenesis; peptidoglycan recycling. In terms of biological role, catalyzes the specific phosphorylation of 1,6-anhydro-N-acetylmuramic acid (anhMurNAc) with the simultaneous cleavage of the 1,6-anhydro ring, generating MurNAc-6-P. Is required for the utilization of anhMurNAc either imported from the medium or derived from its own cell wall murein, and thus plays a role in cell wall recycling. In Xylella fastidiosa (strain Temecula1 / ATCC 700964), this protein is Anhydro-N-acetylmuramic acid kinase.